Consider the following 412-residue polypeptide: Putative competence-damage inducible protein (412 aa).

Belongs to the CinA family.

The chain is Putative competence-damage inducible protein from Clostridium perfringens (strain SM101 / Type A).